Consider the following 452-residue polypeptide: uncharacterized protein (452 aa).

An N-terminal signal peptide occupies residues 1 to 20 (MQFFGSLFVSLLGAAGLANA). The segment at 130–151 (TQSSSNSTSTMNSTGSVSGGSV) is disordered.

It localises to the endoplasmic reticulum. This is an uncharacterized protein from Schizosaccharomyces pombe (strain 972 / ATCC 24843) (Fission yeast).